The sequence spans 459 residues: Putrescine aminotransferase (459 aa).

Residues 150-151 (GT) and Gln274 contribute to the pyridoxal 5'-phosphate site. Lys300 bears the N6-(pyridoxal phosphate)lysine mark. Thr332 lines the pyridoxal 5'-phosphate pocket.

The protein belongs to the class-III pyridoxal-phosphate-dependent aminotransferase family. Putrescine aminotransferase subfamily. Requires pyridoxal 5'-phosphate as cofactor.

It carries out the reaction an alkane-alpha,omega-diamine + 2-oxoglutarate = an omega-aminoaldehyde + L-glutamate. It catalyses the reaction putrescine + 2-oxoglutarate = 1-pyrroline + L-glutamate + H2O. The catalysed reaction is cadaverine + 2-oxoglutarate = 5-aminopentanal + L-glutamate. It participates in amine and polyamine degradation; putrescine degradation; 4-aminobutanal from putrescine (transaminase route): step 1/1. Functionally, catalyzes the aminotransferase reaction from putrescine to 2-oxoglutarate, leading to glutamate and 4-aminobutanal, which spontaneously cyclizes to form 1-pyrroline. This is the first step in one of two pathways for putrescine degradation, where putrescine is converted into 4-aminobutanoate (gamma-aminobutyrate or GABA) via 4-aminobutanal. Also functions as a cadaverine transaminase in a a L-lysine degradation pathway to succinate that proceeds via cadaverine, glutarate and L-2-hydroxyglutarate. This Salmonella dublin (strain CT_02021853) protein is Putrescine aminotransferase.